Here is a 501-residue protein sequence, read N- to C-terminus: Putative zinc metalloprotease TM_0890 (501 aa).

Histidine 17 provides a ligand contact to Zn(2+). Glutamate 18 is an active-site residue. Histidine 21 is a Zn(2+) binding site. 4 helical membrane passes run 93 to 115 (FLIT…LPIT), 401 to 420 (VQTG…SAAS), 427 to 449 (VLTV…LPAL), and 474 to 496 (IIHF…LDIG). The 85-residue stretch at 96-180 (TLAGPLFSIL…LVIIRNGEKK (85 aa)) folds into the PDZ domain.

This sequence belongs to the peptidase M50B family. Zn(2+) is required as a cofactor.

Its subcellular location is the cell inner membrane. The chain is Putative zinc metalloprotease TM_0890 from Thermotoga maritima (strain ATCC 43589 / DSM 3109 / JCM 10099 / NBRC 100826 / MSB8).